We begin with the raw amino-acid sequence, 402 residues long: Proline-rich protein 25 (402 aa).

3 disordered regions span residues 1-29, 109-255, and 337-371; these read MART…AAAH, TVPG…MVGS, and EAAQ…CPGR. Residues 345 to 355 show a composition bias toward low complexity; sequence RRTAPPRRTAS. Residues 356–367 show a composition bias toward pro residues; that stretch reads PEPPAPGAPLPA.

In Homo sapiens (Human), this protein is Proline-rich protein 25 (PRR25).